A 275-amino-acid polypeptide reads, in one-letter code: Thiazole synthase (275 aa).

The active-site Schiff-base intermediate with DXP is Lys116. 1-deoxy-D-xylulose 5-phosphate-binding positions include Gly177, 203–204 (AG), and 225–226 (NT).

It belongs to the ThiG family. In terms of assembly, homotetramer. Forms heterodimers with either ThiH or ThiS.

It localises to the cytoplasm. It catalyses the reaction [ThiS sulfur-carrier protein]-C-terminal-Gly-aminoethanethioate + 2-iminoacetate + 1-deoxy-D-xylulose 5-phosphate = [ThiS sulfur-carrier protein]-C-terminal Gly-Gly + 2-[(2R,5Z)-2-carboxy-4-methylthiazol-5(2H)-ylidene]ethyl phosphate + 2 H2O + H(+). It functions in the pathway cofactor biosynthesis; thiamine diphosphate biosynthesis. In terms of biological role, catalyzes the rearrangement of 1-deoxy-D-xylulose 5-phosphate (DXP) to produce the thiazole phosphate moiety of thiamine. Sulfur is provided by the thiocarboxylate moiety of the carrier protein ThiS. In vitro, sulfur can be provided by H(2)S. This is Thiazole synthase from Acaryochloris marina (strain MBIC 11017).